A 324-amino-acid chain; its full sequence is MANMFALILVIATLVTGILWCVDKFFFAPKRRERQAAAQAAAGDSLDKATLKKVAPKPGWLETGASVFPVLAIVLIVRSFIYEPFQIPSGSMMPTLLIGDFILVEKFAYGIKDPIYQKTLIETGHPKRGDIVVFKYPEDPKLDYIKRAVGLPGDKVTYDPVSKELTIQPGCSSGQACENALPVTYSNVEPSDFVQTFSRRNGGEATSGFFEVPKNETKENGIRLSERKETLGDVTHRILTVPIAQDQVGMYYQQPGQQLATWIVPPGQYFMMGDNRDNSADSRYWGFVPEANLVGRATAIWMSFDKQEGEWPTGLRLSRIGGIH.

Met-1 carries the post-translational modification Blocked amino end (Met). The Periplasmic segment spans residues 1-3; it reads MAN. The chain crosses the membrane as a helical span at residues 4–22; it reads MFALILVIATLVTGILWCV. The Cytoplasmic portion of the chain corresponds to 23 to 58; it reads DKFFFAPKRRERQAAAQAAAGDSLDKATLKKVAPKP. Residues 59–77 form a helical membrane-spanning segment; that stretch reads GWLETGASVFPVLAIVLIV. Over 78-324 the chain is Periplasmic; that stretch reads RSFIYEPFQI…LRLSRIGGIH (247 aa). Catalysis depends on residues Ser-91 and Lys-146. Cysteines 171 and 177 form a disulfide.

It belongs to the peptidase S26 family.

Its subcellular location is the cell inner membrane. The catalysed reaction is Cleavage of hydrophobic, N-terminal signal or leader sequences from secreted and periplasmic proteins.. The chain is Signal peptidase I (lepB) from Escherichia coli (strain K12).